Here is a 161-residue protein sequence, read N- to C-terminus: Vasotocin-neurophysin VT (161 aa).

The N-terminal stretch at 1–19 is a signal peptide; it reads MAEPSLPLSFLCLLALSSA. A disulfide bridge connects residues Cys-20 and Cys-25. Gly-28 is subject to Glycine amide. Disulfide bonds link Cys-41-Cys-85, Cys-44-Cys-58, Cys-52-Cys-75, Cys-59-Cys-65, Cys-92-Cys-104, Cys-98-Cys-116, and Cys-105-Cys-110.

It belongs to the vasopressin/oxytocin family. Seven disulfide bonds are present in neurophysin.

The protein resides in the secreted. In terms of biological role, vasotocin is an antidiuretic hormone. The chain is Vasotocin-neurophysin VT from Gallus gallus (Chicken).